Consider the following 348-residue polypeptide: Phospho-2-dehydro-3-deoxyheptonate aldolase, Trp-sensitive (348 aa).

This sequence belongs to the class-I DAHP synthase family.

It carries out the reaction D-erythrose 4-phosphate + phosphoenolpyruvate + H2O = 7-phospho-2-dehydro-3-deoxy-D-arabino-heptonate + phosphate. The protein operates within metabolic intermediate biosynthesis; chorismate biosynthesis; chorismate from D-erythrose 4-phosphate and phosphoenolpyruvate: step 1/7. Its function is as follows. Stereospecific condensation of phosphoenolpyruvate (PEP) and D-erythrose-4-phosphate (E4P) giving rise to 3-deoxy-D-arabino-heptulosonate-7-phosphate (DAHP). This is Phospho-2-dehydro-3-deoxyheptonate aldolase, Trp-sensitive (aroH) from Escherichia coli O157:H7.